The chain runs to 154 residues: Lipoprotein signal peptidase (154 aa).

Helical transmembrane passes span 4 to 24 (IIIP…KLWI), 62 to 82 (LFTL…MKHI), and 84 to 104 (GSYW…GNFI). Active-site residues include Asp-114 and Asp-130. Residues 125–145 (IFNVADSYLTIGIICLMIALW) traverse the membrane as a helical segment.

Belongs to the peptidase A8 family.

The protein localises to the cell membrane. It carries out the reaction Release of signal peptides from bacterial membrane prolipoproteins. Hydrolyzes -Xaa-Yaa-Zaa-|-(S,diacylglyceryl)Cys-, in which Xaa is hydrophobic (preferably Leu), and Yaa (Ala or Ser) and Zaa (Gly or Ala) have small, neutral side chains.. The protein operates within protein modification; lipoprotein biosynthesis (signal peptide cleavage). This protein specifically catalyzes the removal of signal peptides from prolipoproteins. The sequence is that of Lipoprotein signal peptidase from Streptococcus agalactiae serotype V (strain ATCC BAA-611 / 2603 V/R).